We begin with the raw amino-acid sequence, 130 residues long: Phosphoribosyl-AMP cyclohydrolase 1 (130 aa).

D77 contributes to the Mg(2+) binding site. A Zn(2+)-binding site is contributed by C78. Mg(2+)-binding residues include D79 and D81. Zn(2+) is bound by residues C95 and C102.

Belongs to the PRA-CH family. Homodimer. Mg(2+) is required as a cofactor. Requires Zn(2+) as cofactor.

It is found in the cytoplasm. It catalyses the reaction 1-(5-phospho-beta-D-ribosyl)-5'-AMP + H2O = 1-(5-phospho-beta-D-ribosyl)-5-[(5-phospho-beta-D-ribosylamino)methylideneamino]imidazole-4-carboxamide. It functions in the pathway amino-acid biosynthesis; L-histidine biosynthesis; L-histidine from 5-phospho-alpha-D-ribose 1-diphosphate: step 3/9. In terms of biological role, catalyzes the hydrolysis of the adenine ring of phosphoribosyl-AMP. This chain is Phosphoribosyl-AMP cyclohydrolase 1, found in Pseudomonas fluorescens (strain ATCC BAA-477 / NRRL B-23932 / Pf-5).